Reading from the N-terminus, the 513-residue chain is Cytochrome P450 94A2 (513 aa).

A helical transmembrane segment spans residues Ile-7–Thr-24. Residue Cys-455 coordinates heme.

The protein belongs to the cytochrome P450 family. Requires heme as cofactor. In terms of tissue distribution, weakly expressed in seedlings.

The protein localises to the endoplasmic reticulum membrane. Catalyzes the omega-hydroxylation of various fatty acids (FA). The substrate specificity is higher for myristate &gt; laurate = palmitate (C14&gt;C16=C12). This is Cytochrome P450 94A2 (CYP94A2) from Vicia sativa (Spring vetch).